The following is a 128-amino-acid chain: Large-conductance mechanosensitive channel (128 aa).

The next 2 membrane-spanning stretches (helical) occupy residues 10–30 (FAMR…SAFG) and 76–96 (GLFI…FMMI).

It belongs to the MscL family. In terms of assembly, homopentamer.

The protein localises to the cell inner membrane. Channel that opens in response to stretch forces in the membrane lipid bilayer. May participate in the regulation of osmotic pressure changes within the cell. This Haemophilus influenzae (strain PittEE) protein is Large-conductance mechanosensitive channel.